The sequence spans 197 residues: Imidazoleglycerol-phosphate dehydratase (197 aa).

It belongs to the imidazoleglycerol-phosphate dehydratase family.

The protein localises to the cytoplasm. The catalysed reaction is D-erythro-1-(imidazol-4-yl)glycerol 3-phosphate = 3-(imidazol-4-yl)-2-oxopropyl phosphate + H2O. The protein operates within amino-acid biosynthesis; L-histidine biosynthesis; L-histidine from 5-phospho-alpha-D-ribose 1-diphosphate: step 6/9. In Nitrosomonas europaea (strain ATCC 19718 / CIP 103999 / KCTC 2705 / NBRC 14298), this protein is Imidazoleglycerol-phosphate dehydratase.